The following is a 746-amino-acid chain: EF-hand domain-containing family member C2 (746 aa).

3 DM10 domains span residues 75-182 (DKQV…RKMG), 226-367 (DGHV…RTKY), and 429-536 (ESNT…EKHA). One can recognise an EF-hand domain in the interval 557-592 (PRSREIRQVFAAADPQHTKVIEYDPFRNLIVSITDG).

It is found in the cytoplasm. The protein resides in the cytoskeleton. It localises to the cilium axoneme. Functionally, microtubule inner protein (MIP) part of the dynein-decorated doublet microtubules (DMTs) in cilia axoneme, which is required for motile cilia beating. This is EF-hand domain-containing family member C2 (EFHC2) from Gallus gallus (Chicken).